The chain runs to 338 residues: Fructose-1,6-bisphosphatase class 1 (338 aa).

Residues E91, D113, L115, and D116 each contribute to the Mg(2+) site. Residues 116-119 (DGSS), N211, Y244, and K277 each bind substrate. E283 contributes to the Mg(2+) binding site.

The protein belongs to the FBPase class 1 family. As to quaternary structure, homotetramer. The cofactor is Mg(2+).

The protein resides in the cytoplasm. The catalysed reaction is beta-D-fructose 1,6-bisphosphate + H2O = beta-D-fructose 6-phosphate + phosphate. The protein operates within carbohydrate biosynthesis; gluconeogenesis. This is Fructose-1,6-bisphosphatase class 1 from Oleidesulfovibrio alaskensis (strain ATCC BAA-1058 / DSM 17464 / G20) (Desulfovibrio alaskensis).